The sequence spans 374 residues: Mitochondrial inner membrane protein oxa1-1 (374 aa).

Residues threonine 77–valine 97 form a helical membrane-spanning segment. Residues arginine 98–proline 159 lie on the Mitochondrial intermembrane side of the membrane. A helical transmembrane segment spans residues phenylalanine 160 to isoleucine 180. The Mitochondrial matrix portion of the chain corresponds to arginine 181 to threonine 242. A helical transmembrane segment spans residues phenylalanine 243–phenylalanine 263. Topologically, residues methionine 264–asparagine 374 are mitochondrial intermembrane.

This sequence belongs to the OXA1/ALB3/YidC family.

The protein resides in the mitochondrion inner membrane. Required for the insertion of integral membrane proteins into the mitochondrial inner membrane. Essential for the activity and assembly of cytochrome c oxidase. Not essential for viability, while oxa102 is essential. When both genes are deleted the cell is non-viable, suggesting that oxa101 act as a back-up for oxa102. This is Mitochondrial inner membrane protein oxa1-1 (oxa101) from Schizosaccharomyces pombe (strain 972 / ATCC 24843) (Fission yeast).